A 52-amino-acid chain; its full sequence is Photosystem II reaction center protein M (52 aa).

The helical transmembrane segment at Phe6–Phe26 threads the bilayer. The interval Asp31–Lys52 is disordered. A compositionally biased stretch (basic and acidic residues) spans Ser42–Lys52.

Belongs to the PsbM family. In terms of assembly, PSII is composed of 1 copy each of membrane proteins PsbA, PsbB, PsbC, PsbD, PsbE, PsbF, PsbH, PsbI, PsbJ, PsbK, PsbL, PsbM, PsbT, PsbX, PsbY, Psb30/Ycf12, peripheral proteins PsbO, CyanoQ (PsbQ), PsbU, PsbV and a large number of cofactors. It forms dimeric complexes.

The protein resides in the cellular thylakoid membrane. One of the components of the core complex of photosystem II (PSII). PSII is a light-driven water:plastoquinone oxidoreductase that uses light energy to abstract electrons from H(2)O, generating O(2) and a proton gradient subsequently used for ATP formation. It consists of a core antenna complex that captures photons, and an electron transfer chain that converts photonic excitation into a charge separation. This subunit is found at the monomer-monomer interface. This is Photosystem II reaction center protein M from Prochlorococcus marinus (strain NATL1A).